A 129-amino-acid polypeptide reads, in one-letter code: UPF0325 protein YPTS_3127 (129 aa).

Belongs to the UPF0325 family.

This chain is UPF0325 protein YPTS_3127, found in Yersinia pseudotuberculosis serotype IB (strain PB1/+).